The following is a 92-amino-acid chain: DNA-directed RNA polymerase subunit omega (92 aa).

This sequence belongs to the RNA polymerase subunit omega family. In terms of assembly, the RNAP catalytic core consists of 2 alpha, 1 beta, 1 beta' and 1 omega subunit. When a sigma factor is associated with the core the holoenzyme is formed, which can initiate transcription.

The enzyme catalyses RNA(n) + a ribonucleoside 5'-triphosphate = RNA(n+1) + diphosphate. Its function is as follows. Promotes RNA polymerase assembly. Latches the N- and C-terminal regions of the beta' subunit thereby facilitating its interaction with the beta and alpha subunits. This is DNA-directed RNA polymerase subunit omega from Shewanella oneidensis (strain ATCC 700550 / JCM 31522 / CIP 106686 / LMG 19005 / NCIMB 14063 / MR-1).